Reading from the N-terminus, the 185-residue chain is Pap fimbrial major pilin protein (185 aa).

The signal sequence occupies residues 1 to 22; it reads MIKSVIAGAVAMAVVSFGVNNA. A disulfide bond links cysteine 44 and cysteine 83.

This sequence belongs to the fimbrial protein family.

It is found in the secreted. The protein localises to the fimbrium. In terms of biological role, polymerizes to form the thick (6.8 nm in diameter) rod of the pilus (also called fimbria). The rod is a right-handed helical cylinder with 3.28 PapA subunits per turn. Pili are polar filaments radiating from the surface of the bacterium to a length of 0.5-1.5 micrometers and numbering 100-300 per cell, and enable bacteria to colonize the epithelium of specific host organs. In Escherichia coli, this protein is Pap fimbrial major pilin protein (papA).